Reading from the N-terminus, the 1807-residue chain is MRYCTIPPVHSPIIRLQHGILSKMKLIYFSNEFPPDDLHTLFRELHNHSKDRRHPILARFLEEATLAVREEVRRLPAHLRALIPPFESIWNFADFADLRKGQLCGSIDGILLCSVELGTLIRYYENNPDAFNLETGGTILAGLGIGLLATAAVSLASTVADLPITGAQVIRQAFRLGILVDEVSQNLQPRDATDTSTPDSWAYVLPNVSASEVQQELDTMQGIVKTPEASKIFISALSATAVTISGPPARLQAMFRTSQFFHDHKSVALPVYGGLCHAKHIYTVEDVHHIVRTSSMALLDSKFSPQLPIHSTSTGAPFPAVNATELFEHIIGEILMRAIQWDKVIQGVAQLAQDVGATRCEIVVFRNSLPIHDLAAALKTIPGLETSTQEIIPWVHSKPPAGEGGPRGPLQSKIAIVGMSCRMPGGATDTEKFWELLESGLDVHRKIPADRFDVDSHYDPAGKRLNASHTPYGCFIDEPGLFDAPFFNMSPREAQQTDPMQRLALVTAYEALERAGYVANRTAATDLHRIGTFYGQASDDYREVNSAQEISTYFIPGGCRAFGPGRINYFFKFSGPSYSIDTACSSSLATIQTACAALWNGDVDTAVAGGTNVLTNSDAFAGLSHGHFLSKTPNACKTWDCNADGYCRADAVGSIVMKRLEDAEADNDNILGVILAAATNHSAEAISITHPHAGHQAYLGKLVANRAGIDPLDVGFVEMHGTGTQAGDAEEIQSVTNAYAPTTRRRTAKNPLYIGAVKSNVGHSEAAAGVTAMLKVLLMFQKNAIPPHVGIKTGLNPIFPNDLDKRQVRIPYERTEWPHVPGKKRVAVVNNFSAAGGNTTILLEEGPVQEATETDPRSTHVVAVSAKSKISLKGNIERILAYLEQHPDASLANLSYSTTARRYHHNHRVAIAASGIAQVKKQLQSALDSVDSHKPIPTTGAPPVAFTFTGQGASYKSYNLELFSSSPYFRSQILHLDAIAQGQGFASFLPVIDGSHQRDHQHSQVMTQLALVCTEIAIAKYWGSLGVKPDVVIGHSLGEYAALHIAGVLSASDTIFLVGQRAALLEKKCKVGSHNMVAVRASLAQIEASAGKYPYEIACINGPKETVLSGPTTEMDAIIPVLEGDGHKCYRLEVAFAFHSAQTDPILDGFEALANSGVLFQAPQIPVISPLLCKVIFDDKSVNARYVRRATREPVNFLSALEIARDIGIVDDETAWIEIGPHPVCVGFIKSTLSPVNVAVPSLRRGDDNYTTMAQSLAALHCAGVKVEWSEFHRPFEAALRLLDLPTYAWNDKTYWIQYIGDWALTKGNTFYDKEKGLNSAPAALPTPKSSISTSTVHQIIQESIDGEAGTVVMQSDLMQADFRAAAWGHKMNQCGVVTSSVHADIAYTLGEYLYKKLKPKSKQVHMNIANLEVLKGLIANKNPESHQLIQVSVTTSDIGSNTAELTWYNVHADGTVDEPFASATLIYGDPSEWLSSWIPMTHLVQGRIHELERLAESGVANRFNHQMAYLLFANSLVDYAAKYRGMQSVVLHELEAFADVVLSTESGGRWTVPPYFIDSVAHLAGFVLNVSDAMDTQNNFCITPGWRSMRLARPLVAGGRYRSYVKMIPTAEDPSVYLGDVYVLQDGVVVGMVGGIQFRRYPRILLSRFFSAPDDAHAPPVATSTSSKHAVATPATKGVNGVKAVKAAPAVNGTNGVKTVPAVNGTNGVKATPAVNGVKPAPPVEVEVNSDTTTAKAIQIIAAESGLDLADLTDDSSFADLGVDSLMSLVIAEKFRADLGVVVGGSLFLEYPTIGDLRSWLEEYYS.

An N-terminal acylcarrier protein transacylase domain (SAT) region spans residues 41–173; sequence LFRELHNHSK…ITGAQVIRQA (133 aa). Residues 411–845 form the Ketosynthase family 3 (KS3) domain; the sequence is QSKIAIVGMS…GGNTTILLEE (435 aa). Catalysis depends on for beta-ketoacyl synthase activity residues Cys-584, His-720, and His-763. Positions 946–1265 are malonyl-CoA:ACP transacylase (MAT) domain; the sequence is FTFTGQGASY…SLAALHCAGV (320 aa). Positions 1334 to 1653 are product template (PT) domain; that stretch reads TSTVHQIIQE…RILLSRFFSA (320 aa). Residues 1338-1473 are N-terminal hotdog fold; it reads HQIIQESIDG…ATLIYGDPSE (136 aa). Residues 1338-1648 form the PKS/mFAS DH domain; sequence HQIIQESIDG…FRRYPRILLS (311 aa). Residue His-1370 is the Proton acceptor; for dehydratase activity of the active site. The tract at residues 1500–1648 is C-terminal hotdog fold; sequence VANRFNHQMA…FRRYPRILLS (149 aa). Asp-1559 acts as the Proton donor; for dehydratase activity in catalysis. One can recognise a Carrier domain in the interval 1732–1806; the sequence is DTTTAKAIQI…DLRSWLEEYY (75 aa). Ser-1766 carries the post-translational modification O-(pantetheine 4'-phosphoryl)serine.

The enzyme catalyses holo-[ACP] + 8 malonyl-CoA + 8 H(+) = atrochrysone carboxyl-[ACP] + 8 CO2 + 8 CoA + 2 H2O. It participates in secondary metabolite biosynthesis. Its function is as follows. Non-reducing polyketide synthase; part of the gene cluster that mediates the biosynthesis of agnestins, dihydroxy-xanthone metabolites. The pathway begins with the assembly and cyclization of atrochrysone thioester by the non-reducing polyketide synthase Agnpks1. The atrochrysone carboxyl ACP thioesterase AgnL7 then breaks the thioester bond and releases the atrochrysone carboxylic acid as the first enzyme-free intermediate. The decarboxylase AgnL1 then catalyzes the concerted decarboxylation-elimination required to convert atochrysone carboxylic acid into emodin anthrone, which is further oxidized to emodin by the anthrone oxygenase AgnL2. Emodin then undergoes reduction catalyzed by the oxidoreductase AgnL4 to yield the dihydroquinone tautomer which is the substrate for reduction by the short chain dehydrogenase AgnL6 reduction to produce hydroxyketone, followed by AgnL8 dehydration and likely spontaneous autoxidation to chrysophanol. Baeyer-Villiger oxidation by the oxidase AgnL3 leads to monodictyphenone via cleavage of the C-10/C-10a bond of chrysophanol. Alternative cleavage at the C-4a/C-10 bond of chrysophanol also leads to the formation some cephalone F. Further conversion to agnestins A and B, requires reduction to dihydro-monodictyphenone, oxidation to agnestin C probably via an epoxide, and rearrangement to either agnestin A or agnestin B directly, although agnestin A or agnestin B can also interconvert. Within the cluster, AgnR1 is the only unassigned oxidoreductase present which could be involved in this conversion. However, AgnR1 seems not to be involved in this step, and thus genes involved in the proposed oxidation/reduction may be located elsewhere on the genome. Further agnestin A derivatives are probably formed by spontaneous decarboxylations, dehydrations and methanolysis reactions. This Paecilomyces divaricatus (Penicillium divaricatum) protein is Atrochrysone carboxylic acid synthase Agnpks1.